Reading from the N-terminus, the 444-residue chain is E3 ubiquitin-protein ligase RNFT2 (444 aa).

Residues 1-181 (MWLFTVNQVL…ILLAKLCFQH (181 aa)) lie on the Extracellular side of the membrane. Disordered stretches follow at residues 13–41 (MQRR…ASVD) and 92–149 (PASR…PGTP). The segment covering 107–121 (YHHRQPHHHFHHGGH) has biased composition (basic residues). Basic and acidic residues predominate over residues 131–140 (GGDHRGHSEE). Residues 182-202 (KLGIAVCIGMASTFAYANSTL) form a helical membrane-spanning segment. The Cytoplasmic segment spans residues 203 to 214 (REQVSLKEKRSV). A helical membrane pass occupies residues 215 to 235 (LVILWILAFLAGNTLYVLYTF). Topologically, residues 236 to 255 (SSQQLYNSLIFLKPNLEMLD) are extracellular. A helical membrane pass occupies residues 256 to 276 (FFDLLWIVGIADFVLKYITIA). Residues 277-329 (LKCLIVALPKIILAVKSKGKFYLVIEELSQLFRSLVPIQLWYKYIMGDDSSNS) lie on the Cytoplasmic side of the membrane. A helical transmembrane segment spans residues 330-350 (YFLGGVLIVLYSLCKSFDICG). Residues 351-444 (RVGGVRKALK…GATSAHFQVY (94 aa)) lie on the Extracellular side of the membrane. The RING-type zinc-finger motif lies at 384–422 (CAICQAEFREPLILLCQHVFCEECLCLWLDRERTCPLCR).

It localises to the membrane. Functionally, E3 ubiquitin-protein ligase that negatively regulates IL3-dependent cellular responses through IL3RA ubiquitination and degradation by the proteasome, having an anti-inflammatory effect. This is E3 ubiquitin-protein ligase RNFT2 from Homo sapiens (Human).